Consider the following 529-residue polypeptide: tRNA-2-methylthio-N(6)-dimethylallyladenosine synthase (529 aa).

An MTTase N-terminal domain is found at 18-134; that stretch reads RTYQVRTYGC…LPTLLERARH (117 aa). [4Fe-4S] cluster-binding residues include cysteine 27, cysteine 63, cysteine 97, cysteine 171, cysteine 175, and cysteine 178. Residues 157–404 form the Radical SAM core domain; that stretch reads RESAYAGWVS…IELQERISLE (248 aa). In terms of domain architecture, TRAM spans 407 to 486; the sequence is QAQVGRTLEL…PHHLIADGAL (80 aa).

The protein belongs to the methylthiotransferase family. MiaB subfamily. Monomer. The cofactor is [4Fe-4S] cluster.

The protein resides in the cytoplasm. It carries out the reaction N(6)-dimethylallyladenosine(37) in tRNA + (sulfur carrier)-SH + AH2 + 2 S-adenosyl-L-methionine = 2-methylsulfanyl-N(6)-dimethylallyladenosine(37) in tRNA + (sulfur carrier)-H + 5'-deoxyadenosine + L-methionine + A + S-adenosyl-L-homocysteine + 2 H(+). In terms of biological role, catalyzes the methylthiolation of N6-(dimethylallyl)adenosine (i(6)A), leading to the formation of 2-methylthio-N6-(dimethylallyl)adenosine (ms(2)i(6)A) at position 37 in tRNAs that read codons beginning with uridine. The polypeptide is tRNA-2-methylthio-N(6)-dimethylallyladenosine synthase (Mycobacterium sp. (strain KMS)).